The chain runs to 54 residues: Large ribosomal subunit protein bL33 (54 aa).

This sequence belongs to the bacterial ribosomal protein bL33 family.

This Chloroflexus aurantiacus (strain ATCC 29366 / DSM 635 / J-10-fl) protein is Large ribosomal subunit protein bL33.